The chain runs to 258 residues: MCALVPPLFPNFGWPSTGEYDSYYLAGDILNNGGFLDFPVPEETYGAVTAVTQHQNSFGVSVSSEGNEIDNNPVVVKKLNHNASERDRRRKINSLFSSLRSCLPASGQSKKLSIPATVSRSLKYIPELQEQVKKLIKKKEELLVQISGQRNTECYVKQPPKAVANYISTVSATRLGDNEVMVQISSSKIHNFSISNVLSGLEEDRFVLVDMSSSRSQGERLFYTLHLQVEKIENYKLNCEELSQRMLYLYEECGNSYI.

Residues 76 to 128 (VKKLNHNASERDRRRKINSLFSSLRSCLPASGQSKKLSIPATVSRSLKYIPEL) form the bHLH domain.

In terms of assembly, homodimer. Expressed in vascular tissues. Detected in roots.

The protein localises to the nucleus. The sequence is that of Transcription factor ORG3 (ORG3) from Arabidopsis thaliana (Mouse-ear cress).